Consider the following 661-residue polypeptide: DNA ligase (661 aa).

Residues D31–D35, S79–L80, and E112 contribute to the NAD(+) site. The active-site N6-AMP-lysine intermediate is K114. R135, E169, K281, and K305 together coordinate NAD(+). C398, C401, C414, and C420 together coordinate Zn(2+). Positions Q578–L661 constitute a BRCT domain.

The protein belongs to the NAD-dependent DNA ligase family. LigA subfamily. The cofactor is Mg(2+). It depends on Mn(2+) as a cofactor.

It carries out the reaction NAD(+) + (deoxyribonucleotide)n-3'-hydroxyl + 5'-phospho-(deoxyribonucleotide)m = (deoxyribonucleotide)n+m + AMP + beta-nicotinamide D-nucleotide.. In terms of biological role, DNA ligase that catalyzes the formation of phosphodiester linkages between 5'-phosphoryl and 3'-hydroxyl groups in double-stranded DNA using NAD as a coenzyme and as the energy source for the reaction. It is essential for DNA replication and repair of damaged DNA. This is DNA ligase from Alkaliphilus oremlandii (strain OhILAs) (Clostridium oremlandii (strain OhILAs)).